The chain runs to 152 residues: D-aminoacyl-tRNA deacylase 1 (152 aa).

A Gly-cisPro motif, important for rejection of L-amino acids motif is present at residues 140-141 (GP).

Belongs to the DTD family. As to quaternary structure, homodimer.

Its subcellular location is the cytoplasm. The enzyme catalyses glycyl-tRNA(Ala) + H2O = tRNA(Ala) + glycine + H(+). The catalysed reaction is a D-aminoacyl-tRNA + H2O = a tRNA + a D-alpha-amino acid + H(+). An aminoacyl-tRNA editing enzyme that deacylates mischarged D-aminoacyl-tRNAs. Hydrolyzes correctly charged, achiral, glycyl-tRNA(Gly). Deacylates mischarged D.melanogaster and E.coli glycyl-tRNA(Ala), protecting cells against glycine mischarging by AlaRS. Acts via tRNA-based rather than protein-based catalysis; rejects L-amino acids rather than detecting D-amino acids in the active site. By recycling D-aminoacyl-tRNA to D-amino acids and free tRNA molecules, this enzyme counteracts the toxicity associated with the formation of D-aminoacyl-tRNA entities in vivo and helps enforce protein L-homochirality. The chain is D-aminoacyl-tRNA deacylase 1 (dtd1) from Leishmania major.